The following is a 477-amino-acid chain: Adenylyl cyclase-associated protein 2 (477 aa).

A2 bears the N-acetylalanine mark. Disordered stretches follow at residues 224-262 (SILS…PSRS) and 274-324 (ITKG…HAPV). The span at 231–248 (GLPPPPPPPPPPGPPPPF) shows a compositional bias: pro residues. The segment covering 300–318 (RSPTKTRTPSPTSSKSNSP) has biased composition (low complexity). Residues S301 and S309 each carry the phosphoserine modification. The C-CAP/cofactor C-like domain occupies 318 to 455 (PQKHAPVLEL…QGDDYREFPI (138 aa)).

The protein belongs to the CAP family. In terms of tissue distribution, found at relatively high levels in testes, at moderate levels in brain, heart and skeletal muscle, at lower levels in lung, skin, kidney and small intestine, and is undetectable in liver or spleen.

It localises to the cell membrane. Functionally, involved in the regulation of actin polymerization. In Rattus norvegicus (Rat), this protein is Adenylyl cyclase-associated protein 2 (Cap2).